The following is a 784-amino-acid chain: Copal-8-ol diphosphate hydratase TPSSA9, chloroplastic (784 aa).

Arg240 is a binding site for substrate. Asp372 and Asp374 together coordinate Mg(2+). The DXDD motif signature appears at 372–375 (DIDD). Residue Arg459 participates in substrate binding.

Belongs to the terpene synthase family.

It is found in the plastid. It localises to the chloroplast. The enzyme catalyses (2E,6E,10E)-geranylgeranyl diphosphate + H2O = 8-hydroxycopalyl diphosphate. The protein operates within secondary metabolite biosynthesis; terpenoid biosynthesis. In terms of biological role, involved in the biosynthesis of labdane-type diterpenoid including sclareol, a diterpene-diol that is used as fragrance and flavoring, and has anticancer effects (able to kill leukemic and colon cancer cells by apoptosis). Sclareol can also be used as synthesis precursor of ambergris substitution fragance products such as ambrox. Terpene synthase that produces 8-hydroxycopalyl diphosphate from geranylgeranyl diphosphate (GGPP). This is Copal-8-ol diphosphate hydratase TPSSA9, chloroplastic from Salvia sclarea (Clary sage).